Consider the following 1071-residue polypeptide: ATP-dependent helicase/deoxyribonuclease subunit B (1071 aa).

Belongs to the helicase family. AddB/RexB type 2 subfamily. Heterodimer of AddA and RexB. It depends on Mg(2+) as a cofactor.

In terms of biological role, the heterodimer acts as both an ATP-dependent DNA helicase and an ATP-dependent, dual-direction single-stranded exonuclease. Recognizes the chi site generating a DNA molecule suitable for the initiation of homologous recombination. This subunit has 5' -&gt; 3' nuclease activity but not helicase activity. The sequence is that of ATP-dependent helicase/deoxyribonuclease subunit B from Streptococcus pyogenes serotype M18 (strain MGAS8232).